The sequence spans 424 residues: Histidinol dehydrogenase (424 aa).

Residues Tyr124, Gln186, and Asn209 each coordinate NAD(+). 3 residues coordinate substrate: Ser232, Gln254, and His257. The Zn(2+) site is built by Gln254 and His257. Catalysis depends on proton acceptor residues Glu322 and His323. Residues His323, Asp356, Glu410, and His415 each coordinate substrate. Asp356 provides a ligand contact to Zn(2+). His415 provides a ligand contact to Zn(2+).

It belongs to the histidinol dehydrogenase family. The cofactor is Zn(2+).

The catalysed reaction is L-histidinol + 2 NAD(+) + H2O = L-histidine + 2 NADH + 3 H(+). It participates in amino-acid biosynthesis; L-histidine biosynthesis; L-histidine from 5-phospho-alpha-D-ribose 1-diphosphate: step 9/9. Functionally, catalyzes the sequential NAD-dependent oxidations of L-histidinol to L-histidinaldehyde and then to L-histidine. The chain is Histidinol dehydrogenase from Moorella thermoacetica (strain ATCC 39073 / JCM 9320).